The chain runs to 141 residues: MSFIGEFKAFAMRGNVVDLAVGVIIGGAFGKIVSSMVDDLIMPIVSIFMGDKGFKDKFFVFGNQTFESLAKAKEAGVPVFAYGNFIQTVIDFTILAFVIFLMVKGMNNLKKKEEAAAPAPVPAEPTKEEQLLTEIRDLLKK.

The next 2 helical transmembrane spans lie at 16 to 36 (VVDLAVGVIIGGAFGKIVSSM) and 83 to 103 (GNFIQTVIDFTILAFVIFLMV).

This sequence belongs to the MscL family. In terms of assembly, homopentamer.

The protein localises to the cell inner membrane. In terms of biological role, channel that opens in response to stretch forces in the membrane lipid bilayer. May participate in the regulation of osmotic pressure changes within the cell. The protein is Large-conductance mechanosensitive channel of Cytophaga hutchinsonii (strain ATCC 33406 / DSM 1761 / CIP 103989 / NBRC 15051 / NCIMB 9469 / D465).